The sequence spans 89 residues: Diphthamide biosynthesis protein 3 (89 aa).

Residues 5–61 (FYDEIELEDMSYDDEKDVFHYPCPCGDRFEITRQQLKDAEDVARCPSCSLIIRVVFD) enclose the DPH-type MB domain. Positions 27, 29, 49, and 52 each coordinate Fe cation.

The protein belongs to the DPH3 family. In terms of assembly, component of the 2-(3-amino-3-carboxypropyl)histidine synthase complex composed of DPH1, DPH2, DPH3 and a NADH-dependent reductase, predominantly CBR1. Requires Fe(2+) as cofactor.

The protein resides in the cytoplasm. Its subcellular location is the nucleus. The catalysed reaction is [3Fe-4S](1+)-[protein] + Fe(2+)-[Dph3] = [3Fe-4S](0)-[protein] + Fe(3+)-[Dph3]. It catalyses the reaction 2 [3Fe-4S](0)-[protein] + 2 Fe(2+)-[Dph3] + NADH = 2 [4Fe-4S](1+)-[protein] + 2 [Dph3] + NAD(+) + H(+). The protein operates within protein modification; peptidyl-diphthamide biosynthesis. In terms of biological role, required for the first step of diphthamide biosynthesis, a post-translational modification of histidine which occurs in elongation factor 2. DPH1 and DPH2 transfer a 3-amino-3-carboxypropyl (ACP) group from S-adenosyl-L-methionine (SAM) to a histidine residue, the reaction is assisted by a reduction system comprising KTI11/DPH3 and a NADH-dependent reductase, predominantly CBR1. Acts as an electron donor to reduce the Fe-S cluster in DPH1-DPH2 keeping the [4Fe-4S] clusters in the active and reduced state. Restores iron to DPH1-DPH2 iron-sulfur clusters which have degraded from [4Fe-4S] to [3Fe-4S] by donating an iron atom to reform [4Fe-4S] clusters, in a manner dependent on the presence of elongation factor 2 and SAM. Associates with the elongator complex and is required for tRNA Wobble base modifications mediated by the elongator complex. The elongator complex is required for multiple tRNA modifications, including mcm5U (5-methoxycarbonylmethyl uridine), mcm5s 2U (5-methoxycarbonylmethyl-2-thiouridine), and ncm5U (5-carbamoylmethyl uridine). The polypeptide is Diphthamide biosynthesis protein 3 (DPH3) (Mycosarcoma maydis (Corn smut fungus)).